A 322-amino-acid polypeptide reads, in one-letter code: Aspartate--ammonia ligase (322 aa).

This sequence belongs to the class-II aminoacyl-tRNA synthetase family. AsnA subfamily.

The protein resides in the cytoplasm. The catalysed reaction is L-aspartate + NH4(+) + ATP = L-asparagine + AMP + diphosphate + H(+). It participates in amino-acid biosynthesis; L-asparagine biosynthesis; L-asparagine from L-aspartate (ammonia route): step 1/1. The polypeptide is Aspartate--ammonia ligase (Lactiplantibacillus plantarum (strain ATCC BAA-793 / NCIMB 8826 / WCFS1) (Lactobacillus plantarum)).